Reading from the N-terminus, the 356-residue chain is Phosphoribosyl pyrophosphate synthase-associated protein 1 (356 aa).

Position 1 is an N-acetylmethionine (Met-1). A phosphoserine mark is found at Ser-177 and Ser-215.

The protein belongs to the ribose-phosphate pyrophosphokinase family. As to quaternary structure, binds to PRPS1 and PRPS2.

Its function is as follows. Seems to play a negative regulatory role in 5-phosphoribose 1-diphosphate synthesis. This Bos taurus (Bovine) protein is Phosphoribosyl pyrophosphate synthase-associated protein 1 (PRPSAP1).